A 188-amino-acid chain; its full sequence is uncharacterized protein (188 aa).

A signal peptide spans 1-23; that stretch reads MFKGQKTLAALAVSLLFTAPVYA. Cysteine 42 and cysteine 81 are disulfide-bonded.

Belongs to the fimbrial protein family.

The protein resides in the fimbrium. This is an uncharacterized protein from Escherichia coli (strain K12).